Reading from the N-terminus, the 46-residue chain is Large ribosomal subunit protein bL34c (46 aa).

The protein belongs to the bacterial ribosomal protein bL34 family.

The protein localises to the plastid. It is found in the chloroplast. The protein is Large ribosomal subunit protein bL34c of Pyropia yezoensis (Susabi-nori).